The primary structure comprises 406 residues: MRFVDEAVITVEAGDGGNGVASFRREKFVPFGGPDGGDGGRGGSIYIQADDDTSTLVDYRYTRKFRAERGKNGAGANCTGRGGEDVVLKVPVGTTIVDTDSGDIIGDLVEDGQRVMVASGGEGGLGNTHFKSSTNRAPRKCTTGTKGEFREIRLELKVLADVGLLGMPNAGKSTFIRAVSAAKPKVADYPFTTMVPNLGVVDADRHRSFVMADIPGLIEGAAEGAGLGIRFLKHLARTRILLHIIDVQPIDGSDPAHNAKAIMNELAKFSPTLAKLPIVLVLNKLDQIAEESREEWCQHILDELQWTGPVFKTSGLLEEGTKEVVYYLMDQIEQQREREVEDPEYAAEVRAFREQLEAETREQTIAAKEAYRAMRKAQRLESMMDDDDDFDDDEDDGDVESIYVRD.

The Obg domain occupies 1–159 (MRFVDEAVIT…REIRLELKVL (159 aa)). The disordered stretch occupies residues 120–143 (GGEGGLGNTHFKSSTNRAPRKCTT). The 174-residue stretch at 160–333 (ADVGLLGMPN…VVYYLMDQIE (174 aa)) folds into the OBG-type G domain. Residues 166 to 173 (GMPNAGKS), 191 to 195 (FTTMV), 213 to 216 (DIPG), 283 to 286 (NKLD), and 314 to 316 (SGL) each bind GTP. Residues S173 and T193 each coordinate Mg(2+). The segment at 381–406 (ESMMDDDDDFDDDEDDGDVESIYVRD) is disordered. Residues 383–399 (MMDDDDDFDDDEDDGDV) show a composition bias toward acidic residues.

The protein belongs to the TRAFAC class OBG-HflX-like GTPase superfamily. OBG GTPase family. Monomer. It depends on Mg(2+) as a cofactor.

The protein resides in the cytoplasm. An essential GTPase which binds GTP, GDP and possibly (p)ppGpp with moderate affinity, with high nucleotide exchange rates and a fairly low GTP hydrolysis rate. Plays a role in control of the cell cycle, stress response, ribosome biogenesis and in those bacteria that undergo differentiation, in morphogenesis control. This chain is GTPase Obg, found in Acinetobacter baumannii (strain ACICU).